An 875-amino-acid chain; its full sequence is Neurotrypsin (875 aa).

The signal sequence occupies residues 1-20; the sequence is MTLARFVLALVLGALPEVVG. A glycan (N-linked (GlcNAc...) asparagine) is linked at asparagine 26. The tract at residues 29–68 is disordered; that stretch reads LHHRHRHSPPPGPQYPYYLPTHQRPPRTRPPPPLPRFSRP. The Kringle domain maps to 93 to 165; the sequence is CPPGEPWVSV…GKVDWGYCDC (73 aa). Disulfide bonds link cysteine 93–cysteine 165, cysteine 109–cysteine 149, cysteine 138–cysteine 163, cysteine 195–cysteine 259, cysteine 208–cysteine 269, cysteine 239–cysteine 249, cysteine 305–cysteine 369, cysteine 318–cysteine 379, cysteine 349–cysteine 359, cysteine 412–cysteine 475, cysteine 425–cysteine 485, cysteine 455–cysteine 465, cysteine 525–cysteine 589, cysteine 538–cysteine 599, cysteine 569–cysteine 579, cysteine 619–cysteine 750, cysteine 661–cysteine 677, cysteine 765–cysteine 831, cysteine 794–cysteine 808, and cysteine 821–cysteine 850. 4 SRCR domains span residues 170–271, 280–381, 387–487, and 500–601; these read VRLR…TCSF, IRLV…SCTP, IRLA…ACYP, and VRLM…ICDY. Residues 619–630 are zymogen activation region; it reads CGLRLLHRRQKR. The 244-residue stretch at 631-874 folds into the Peptidase S1 domain; that stretch reads IIGGKNSLRG…FVPWIKSVTK (244 aa). Catalysis depends on histidine 676, which acts as the Charge relay system. A glycan (N-linked (GlcNAc...) asparagine) is linked at asparagine 683. The Charge relay system role is filled by aspartate 726. The Charge relay system role is filled by serine 825.

The protein belongs to the peptidase S1 family.

The protein localises to the secreted. Functionally, plays a role in neuronal plasticity and the proteolytic action may subserve structural reorganizations associated with learning and memory operations. This chain is Neurotrypsin (PRSS12), found in Trachypithecus phayrei (Phayre's leaf monkey).